The primary structure comprises 83 residues: MLRNLLALRQIAQRTISTTSRRHFENKVPEKQKLFQEDNGMPVHLKGGASDALLYRATMALTLGGTAYAIYLLAMAAFPKKQN.

A mitochondrion-targeting transit peptide spans 1–23; sequence MLRNLLALRQIAQRTISTTSRRH. Over 24–48 the chain is Mitochondrial matrix; that stretch reads FENKVPEKQKLFQEDNGMPVHLKGG. Lys-33 bears the N6-acetyllysine mark. The helical transmembrane segment at 49 to 77 threads the bilayer; it reads ASDALLYRATMALTLGGTAYAIYLLAMAA. Residues 78 to 83 are Mitochondrial intermembrane-facing; that stretch reads FPKKQN.

The protein belongs to the cytochrome c oxidase VIIa family. In terms of assembly, component of the cytochrome c oxidase (complex IV, CIV), a multisubunit enzyme composed of 14 subunits. The complex is composed of a catalytic core of 3 subunits MT-CO1, MT-CO2 and MT-CO3, encoded in the mitochondrial DNA, and 11 supernumerary subunits COX4I, COX5A, COX5B, COX6A, COX6B, COX6C, COX7A, COX7B, COX7C, COX8 and NDUFA4, which are encoded in the nuclear genome. The complex exists as a monomer or a dimer and forms supercomplexes (SCs) in the inner mitochondrial membrane with NADH-ubiquinone oxidoreductase (complex I, CI) and ubiquinol-cytochrome c oxidoreductase (cytochrome b-c1 complex, complex III, CIII), resulting in different assemblies (supercomplex SCI(1)III(2)IV(1) and megacomplex MCI(2)III(2)IV(2)). Interacts with PET100.

It localises to the mitochondrion inner membrane. It participates in energy metabolism; oxidative phosphorylation. Functionally, component of the cytochrome c oxidase, the last enzyme in the mitochondrial electron transport chain which drives oxidative phosphorylation. The respiratory chain contains 3 multisubunit complexes succinate dehydrogenase (complex II, CII), ubiquinol-cytochrome c oxidoreductase (cytochrome b-c1 complex, complex III, CIII) and cytochrome c oxidase (complex IV, CIV), that cooperate to transfer electrons derived from NADH and succinate to molecular oxygen, creating an electrochemical gradient over the inner membrane that drives transmembrane transport and the ATP synthase. Cytochrome c oxidase is the component of the respiratory chain that catalyzes the reduction of oxygen to water. Electrons originating from reduced cytochrome c in the intermembrane space (IMS) are transferred via the dinuclear copper A center (CU(A)) of subunit 2 and heme A of subunit 1 to the active site in subunit 1, a binuclear center (BNC) formed by heme A3 and copper B (CU(B)). The BNC reduces molecular oxygen to 2 water molecules using 4 electrons from cytochrome c in the IMS and 4 protons from the mitochondrial matrix. This chain is Cytochrome c oxidase subunit 7A2, mitochondrial (Cox7a2), found in Mus musculus (Mouse).